We begin with the raw amino-acid sequence, 203 residues long: NADH-quinone oxidoreductase subunit C (203 aa).

It belongs to the complex I 30 kDa subunit family. In terms of assembly, NDH-1 is composed of 14 different subunits. Subunits NuoB, C, D, E, F, and G constitute the peripheral sector of the complex.

It is found in the cell inner membrane. It catalyses the reaction a quinone + NADH + 5 H(+)(in) = a quinol + NAD(+) + 4 H(+)(out). NDH-1 shuttles electrons from NADH, via FMN and iron-sulfur (Fe-S) centers, to quinones in the respiratory chain. The immediate electron acceptor for the enzyme in this species is believed to be ubiquinone. Couples the redox reaction to proton translocation (for every two electrons transferred, four hydrogen ions are translocated across the cytoplasmic membrane), and thus conserves the redox energy in a proton gradient. The sequence is that of NADH-quinone oxidoreductase subunit C from Bartonella tribocorum (strain CIP 105476 / IBS 506).